We begin with the raw amino-acid sequence, 390 residues long: Guanine nucleotide exchange factor for Rab-3A (390 aa).

The segment at 1 to 60 is disordered; it reads MWSGQPHPDEGHPPPLEAVPVPWKSVGPCKSHRESLGGLPETPAGEEAQGEEGPAATQLD. Over residues 40 to 58 the composition is skewed to low complexity; it reads PETPAGEEAQGEEGPAATQ. Residues 73 to 161 adopt a coiled-coil conformation; the sequence is EKGSEFLKEE…AEVTALKTLV (89 aa). The segment at 166-194 is disordered; it reads PASPNRELHPQLLSPTKAGPRKGHLRHKS. 2 positions are modified to phosphoserine: serine 168 and serine 179. Residues 184–194 are compositionally biased toward basic residues; sequence GPRKGHLRHKS.

It belongs to the SEC2 family. As to quaternary structure, interacts with RAB3A and IHPK1 through the coiled-coil domain. This interaction is competitive. IHPK1 kinase activity is not required for this interaction.

Guanine nucleotide exchange factor (GEF) which may activate RAB3A, a GTPase that regulates synaptic vesicle exocytosis. Promotes the exchange of GDP to GTP, converting inactive GDP-bound Rab proteins into their active GTP-bound form. May also activate RAB8A and RAB8B. In Bos taurus (Bovine), this protein is Guanine nucleotide exchange factor for Rab-3A (RAB3IL1).